The chain runs to 503 residues: UDP-N-acetylmuramate--L-alanine ligase (503 aa).

The segment at 1 to 22 (MIKQTHVSNSSNNSTNSTAAQV) is disordered. Low complexity predominate over residues 8 to 18 (SNSSNNSTNST). Residue 135-141 (GTHGKTT) participates in ATP binding.

Belongs to the MurCDEF family.

Its subcellular location is the cytoplasm. The catalysed reaction is UDP-N-acetyl-alpha-D-muramate + L-alanine + ATP = UDP-N-acetyl-alpha-D-muramoyl-L-alanine + ADP + phosphate + H(+). The protein operates within cell wall biogenesis; peptidoglycan biosynthesis. Its function is as follows. Cell wall formation. This Colwellia psychrerythraea (strain 34H / ATCC BAA-681) (Vibrio psychroerythus) protein is UDP-N-acetylmuramate--L-alanine ligase.